We begin with the raw amino-acid sequence, 237 residues long: Orotidine 5'-phosphate decarboxylase (237 aa).

Substrate is bound by residues Asp-11, Lys-34, 61 to 70 (DLKLHDIPNT), Thr-124, Arg-186, Gln-195, Gly-215, and Arg-216. The active-site Proton donor is Lys-63.

Belongs to the OMP decarboxylase family. Type 1 subfamily. In terms of assembly, homodimer.

The enzyme catalyses orotidine 5'-phosphate + H(+) = UMP + CO2. Its pathway is pyrimidine metabolism; UMP biosynthesis via de novo pathway; UMP from orotate: step 2/2. Catalyzes the decarboxylation of orotidine 5'-monophosphate (OMP) to uridine 5'-monophosphate (UMP). The polypeptide is Orotidine 5'-phosphate decarboxylase (Lactococcus lactis subsp. lactis (strain IL1403) (Streptococcus lactis)).